An 830-amino-acid polypeptide reads, in one-letter code: Leucine--tRNA ligase (830 aa).

The short motif at 34–44 (PYPSGNIHMGH) is the 'HIGH' region element. The 'KMSKS' region signature appears at 592-596 (KMSKS). Lys-595 contacts ATP.

This sequence belongs to the class-I aminoacyl-tRNA synthetase family.

The protein resides in the cytoplasm. It catalyses the reaction tRNA(Leu) + L-leucine + ATP = L-leucyl-tRNA(Leu) + AMP + diphosphate. This is Leucine--tRNA ligase from Ehrlichia ruminantium (strain Welgevonden).